Here is a 417-residue protein sequence, read N- to C-terminus: Serine hydroxymethyltransferase 2 (417 aa).

Residues L121 and 125 to 127 contribute to the (6S)-5,6,7,8-tetrahydrofolate site; that span reads GHL. Position 230 is an N6-(pyridoxal phosphate)lysine (K230). (6S)-5,6,7,8-tetrahydrofolate is bound at residue 355-357; the sequence is SPF.

This sequence belongs to the SHMT family. Homodimer. Pyridoxal 5'-phosphate serves as cofactor.

Its subcellular location is the cytoplasm. The catalysed reaction is (6R)-5,10-methylene-5,6,7,8-tetrahydrofolate + glycine + H2O = (6S)-5,6,7,8-tetrahydrofolate + L-serine. Its pathway is one-carbon metabolism; tetrahydrofolate interconversion. The protein operates within amino-acid biosynthesis; glycine biosynthesis; glycine from L-serine: step 1/1. Catalyzes the reversible interconversion of serine and glycine with tetrahydrofolate (THF) serving as the one-carbon carrier. This reaction serves as the major source of one-carbon groups required for the biosynthesis of purines, thymidylate, methionine, and other important biomolecules. Also exhibits THF-independent aldolase activity toward beta-hydroxyamino acids, producing glycine and aldehydes, via a retro-aldol mechanism. The chain is Serine hydroxymethyltransferase 2 from Pseudomonas syringae pv. syringae (strain B728a).